The chain runs to 184 residues: Elongation factor P (184 aa).

The protein belongs to the elongation factor P family.

The protein localises to the cytoplasm. It functions in the pathway protein biosynthesis; polypeptide chain elongation. Functionally, involved in peptide bond synthesis. Stimulates efficient translation and peptide-bond synthesis on native or reconstituted 70S ribosomes in vitro. Probably functions indirectly by altering the affinity of the ribosome for aminoacyl-tRNA, thus increasing their reactivity as acceptors for peptidyl transferase. The sequence is that of Elongation factor P from Polaromonas naphthalenivorans (strain CJ2).